A 274-amino-acid polypeptide reads, in one-letter code: MKQYLDLVKYVLNNGTQKGDRTGTGTKSVFGYQMRFNLAEGFPMVTTKKLHLKSIIHELLWFLKGETNIAYLQQNGVKIWDDWADENGELGPVYGHQWRNWNNEEIDQITELIETLKINPNSRRMLVSAWNPSVLPDTTKSFAENVANAKVALPPCHAFFQFYVSEGKLSCQLYQRSADIFLGVPFNIASYALFTMMIAQVCDLQAGEFIHTFGDAHIYNNHFEQVALQLSREPKPLPKMILNPAVKNIFDFKFEDFKLEGYESHAHIKGAVAV.

Arginine 21 contacts dUMP. Histidine 51 provides a ligand contact to (6R)-5,10-methylene-5,6,7,8-tetrahydrofolate. 123–124 (RR) is a dUMP binding site. The active-site Nucleophile is cysteine 156. DUMP contacts are provided by residues 176–179 (RSAD), asparagine 187, and 217–219 (HIY). Aspartate 179 is a (6R)-5,10-methylene-5,6,7,8-tetrahydrofolate binding site. Alanine 273 provides a ligand contact to (6R)-5,10-methylene-5,6,7,8-tetrahydrofolate.

This sequence belongs to the thymidylate synthase family. Bacterial-type ThyA subfamily. Homodimer.

It is found in the cytoplasm. The catalysed reaction is dUMP + (6R)-5,10-methylene-5,6,7,8-tetrahydrofolate = 7,8-dihydrofolate + dTMP. It participates in pyrimidine metabolism; dTTP biosynthesis. Functionally, catalyzes the reductive methylation of 2'-deoxyuridine-5'-monophosphate (dUMP) to 2'-deoxythymidine-5'-monophosphate (dTMP) while utilizing 5,10-methylenetetrahydrofolate (mTHF) as the methyl donor and reductant in the reaction, yielding dihydrofolate (DHF) as a by-product. This enzymatic reaction provides an intracellular de novo source of dTMP, an essential precursor for DNA biosynthesis. This is Thymidylate synthase from Flavobacterium psychrophilum (strain ATCC 49511 / DSM 21280 / CIP 103535 / JIP02/86).